Reading from the N-terminus, the 753-residue chain is Neuroendocrine convertase 1 (753 aa).

The N-terminal stretch at Met1–Ala27 is a signal peptide. The propeptide occupies Lys28–Arg110. Residues Gln129–Val450 form the Peptidase S8 domain. Catalysis depends on charge relay system residues Asp167 and His208. Intrachain disulfides connect Cys225/Cys374 and Cys317/Cys347. Ser382 acts as the Charge relay system in catalysis. A glycan (N-linked (GlcNAc...) asparagine) is linked at Asn401. Positions Asn460–Gln597 constitute a P/Homo B domain. Cys467 and Cys494 are oxidised to a cystine. The span at Gln633 to Val651 shows a compositional bias: polar residues. The interval Gln633–Pro663 is disordered. The N-linked (GlcNAc...) asparagine glycan is linked to Asn645.

It belongs to the peptidase S8 family. Furin subfamily. Requires Ca(2+) as cofactor.

The protein localises to the cytoplasmic vesicle. It is found in the secretory vesicle. The catalysed reaction is Release of protein hormones, neuropeptides and renin from their precursors, generally by hydrolysis of -Lys-Arg-|- bonds.. Involved in the processing of hormone and other protein precursors at sites comprised of pairs of basic amino acid residues. Substrates include POMC, renin, enkephalin, dynorphin, somatostatin, insulin and AGRP. The protein is Neuroendocrine convertase 1 (Pcsk1) of Mus musculus (Mouse).